The primary structure comprises 455 residues: MNFDTIIIGGGMAGLSCALRCLEAGLKTAVIASGQSALHFSSGSIDVLAKTPSGKHVINPMDSLETFSKEYPSHPYAALGKETVERAINWYKTTLSAIGVPLTSQKDGLNHYRLTPLGTMKSTWLSQPFVHQFPMDLEKNKTQKMVLITIDGFRDFQPKLAQDNLKQITQLSDLEIATASISLSAFNDIQRNHCELRSIDISRLLSKRANRQELAYALQQHANPGDLVVLPSIFGNGTGLSYLREIEQLTKLTLCEVPTMPPSLLGIRLEESMKHAFIELGGTMLNGDHVVQGEFSYVDKSDPEHSHYRLNRLFTKNHGDFPLQAKQFVLATGSFFSQGLKANVDSMIEPIFGLDIAQSDKRTDWYSHDFFSTQSHPFLSMGIKTTANFQAIKSGHVIDNLYCAGAILSGYNPILEGSGSGVAISSGFHAAESIIEQLQCSDSLQNNNTKAEVAL.

This sequence belongs to the anaerobic G-3-P dehydrogenase subunit B family. Composed of a catalytic GlpA/B dimer and of membrane bound GlpC. FMN is required as a cofactor.

It catalyses the reaction a quinone + sn-glycerol 3-phosphate = dihydroxyacetone phosphate + a quinol. It functions in the pathway polyol metabolism; glycerol degradation via glycerol kinase pathway; glycerone phosphate from sn-glycerol 3-phosphate (anaerobic route): step 1/1. Conversion of glycerol 3-phosphate to dihydroxyacetone. Uses fumarate or nitrate as electron acceptor. In Aliivibrio fischeri (strain ATCC 700601 / ES114) (Vibrio fischeri), this protein is Anaerobic glycerol-3-phosphate dehydrogenase subunit B.